The primary structure comprises 506 residues: Kynurenine 3-monooxygenase (506 aa).

A disordered region spans residues 153–175 (QETSLLPGEESEKDKKQNTEDED). A compositionally biased stretch (basic and acidic residues) spans 162 to 171 (ESEKDKKQNT).

It belongs to the aromatic-ring hydroxylase family. KMO subfamily. The cofactor is FAD.

Its subcellular location is the mitochondrion outer membrane. It carries out the reaction L-kynurenine + NADPH + O2 + H(+) = 3-hydroxy-L-kynurenine + NADP(+) + H2O. The protein operates within cofactor biosynthesis; NAD(+) biosynthesis; quinolinate from L-kynurenine: step 1/3. Functionally, catalyzes the hydroxylation of L-kynurenine (L-Kyn) to form 3-hydroxy-L-kynurenine (L-3OHKyn). Required for synthesis of quinolinic acid. This is Kynurenine 3-monooxygenase from Cryptococcus neoformans var. neoformans serotype D (strain B-3501A) (Filobasidiella neoformans).